A 427-amino-acid chain; its full sequence is Enolase 2 (427 aa).

Gln-163 provides a ligand contact to (2R)-2-phosphoglycerate. The active-site Proton donor is Glu-205. Mg(2+)-binding residues include Asp-242, Glu-285, and Asp-312. Lys-337, Arg-366, Ser-367, and Lys-388 together coordinate (2R)-2-phosphoglycerate. Lys-337 functions as the Proton acceptor in the catalytic mechanism.

Belongs to the enolase family. As to quaternary structure, component of the RNA degradosome, a multiprotein complex involved in RNA processing and mRNA degradation. Mg(2+) is required as a cofactor.

Its subcellular location is the cytoplasm. It localises to the secreted. It is found in the cell surface. It catalyses the reaction (2R)-2-phosphoglycerate = phosphoenolpyruvate + H2O. It functions in the pathway carbohydrate degradation; glycolysis; pyruvate from D-glyceraldehyde 3-phosphate: step 4/5. Functionally, catalyzes the reversible conversion of 2-phosphoglycerate (2-PG) into phosphoenolpyruvate (PEP). It is essential for the degradation of carbohydrates via glycolysis. The sequence is that of Enolase 2 from Methylococcus capsulatus (strain ATCC 33009 / NCIMB 11132 / Bath).